The primary structure comprises 116 residues: Large ribosomal subunit protein bL19 (116 aa).

This sequence belongs to the bacterial ribosomal protein bL19 family.

In terms of biological role, this protein is located at the 30S-50S ribosomal subunit interface and may play a role in the structure and function of the aminoacyl-tRNA binding site. This Clostridioides difficile (strain 630) (Peptoclostridium difficile) protein is Large ribosomal subunit protein bL19.